The following is a 362-amino-acid chain: tRNA-specific 2-thiouridylase MnmA (362 aa).

ATP-binding positions include 6-13 (AMSGGVDS) and leucine 32. Cysteine 101 functions as the Nucleophile in the catalytic mechanism. Cysteines 101 and 197 form a disulfide. An ATP-binding site is contributed by glycine 125. The interaction with tRNA stretch occupies residues 147 to 149 (KDQ). Cysteine 197 (cysteine persulfide intermediate) is an active-site residue.

The protein belongs to the MnmA/TRMU family.

The protein localises to the cytoplasm. It carries out the reaction S-sulfanyl-L-cysteinyl-[protein] + uridine(34) in tRNA + AH2 + ATP = 2-thiouridine(34) in tRNA + L-cysteinyl-[protein] + A + AMP + diphosphate + H(+). Its function is as follows. Catalyzes the 2-thiolation of uridine at the wobble position (U34) of tRNA, leading to the formation of s(2)U34. This Saccharopolyspora erythraea (strain ATCC 11635 / DSM 40517 / JCM 4748 / NBRC 13426 / NCIMB 8594 / NRRL 2338) protein is tRNA-specific 2-thiouridylase MnmA.